The primary structure comprises 205 residues: Beta-crystallin B2 (205 aa).

Position 2 is an N-acetylalanine (alanine 2). The tract at residues 2–16 (ASDHQTQAGKPQPLN) is N-terminal arm. 2 Beta/gamma crystallin 'Greek key' domains span residues 17–56 (PKII…LVQA) and 57–101 (GPWV…RPIK). A connecting peptide region spans residues 102-106 (VDSQE). Beta/gamma crystallin 'Greek key' domains lie at 107–148 (HKII…RVQS) and 149–191 (GTWV…RRIR). The tract at residues 193 to 205 (MQWHQRGAFHPTN) is C-terminal arm.

Belongs to the beta/gamma-crystallin family. Homo/heterodimer, or complexes of higher-order. The structure of beta-crystallin oligomers seems to be stabilized through interactions between the N-terminal arms.

In terms of biological role, crystallins are the dominant structural components of the vertebrate eye lens. This is Beta-crystallin B2 (CRYBB2) from Oryctolagus cuniculus (Rabbit).